Here is a 363-residue protein sequence, read N- to C-terminus: Ribosomal RNA small subunit methyltransferase H (363 aa).

S-adenosyl-L-methionine-binding positions include 55-57, Asp-75, Asp-122, and Gln-129; that span reads GGH.

This sequence belongs to the methyltransferase superfamily. RsmH family.

Its subcellular location is the cytoplasm. It carries out the reaction cytidine(1402) in 16S rRNA + S-adenosyl-L-methionine = N(4)-methylcytidine(1402) in 16S rRNA + S-adenosyl-L-homocysteine + H(+). Its function is as follows. Specifically methylates the N4 position of cytidine in position 1402 (C1402) of 16S rRNA. This Bordetella petrii (strain ATCC BAA-461 / DSM 12804 / CCUG 43448) protein is Ribosomal RNA small subunit methyltransferase H.